The chain runs to 201 residues: 3-isopropylmalate dehydratase small subunit (201 aa).

This sequence belongs to the LeuD family. LeuD type 1 subfamily. As to quaternary structure, heterodimer of LeuC and LeuD.

The enzyme catalyses (2R,3S)-3-isopropylmalate = (2S)-2-isopropylmalate. It functions in the pathway amino-acid biosynthesis; L-leucine biosynthesis; L-leucine from 3-methyl-2-oxobutanoate: step 2/4. Catalyzes the isomerization between 2-isopropylmalate and 3-isopropylmalate, via the formation of 2-isopropylmaleate. The sequence is that of 3-isopropylmalate dehydratase small subunit from Shewanella pealeana (strain ATCC 700345 / ANG-SQ1).